A 491-amino-acid chain; its full sequence is Cytochrome P450 2H2 (491 aa).

C436 serves as a coordination point for heme.

The protein belongs to the cytochrome P450 family. It depends on heme as a cofactor.

It is found in the endoplasmic reticulum membrane. It localises to the microsome membrane. The catalysed reaction is an organic molecule + reduced [NADPH--hemoprotein reductase] + O2 = an alcohol + oxidized [NADPH--hemoprotein reductase] + H2O + H(+). In terms of biological role, cytochromes P450 are a group of heme-thiolate monooxygenases. In liver microsomes, this enzyme is involved in an NADPH-dependent electron transport pathway. It oxidizes a variety of structurally unrelated compounds, including steroids, fatty acids, and xenobiotics. This chain is Cytochrome P450 2H2 (CYP2H2), found in Gallus gallus (Chicken).